Consider the following 828-residue polypeptide: MAGRGWGALWVCVAAATLLHAGGLARADCWLIEGDKGFVWLAICSQNQPPYEAIPQQINSTIVDLRLNENRIRSVQYASLSRFGNLTYLNLTKNEIGYIEDGAFSGQFNLQVLQLGYNRLRNLTEGMLRGLGKLEYLYLQANLIEVVMASSFWECPNIVNIDLSMNRIQQLNSGTFAGLAKLSVCELYSNPFYCSCELLGFLRWLAAFTNATQTYDRMQCESPPVYSGYYLLGQGRRGHRSILSKLQSVCTEDSYAAEVVGPPRPASGRSQPGRSPPPPPPPEPSDMPCADDECFSGDGTTPLVALPTLATQAEARPLIKVKQLTQNSATITVQLPSPFHRMYTLEHFNNSKASTVSRLTKAQEEIRLTNLFTLTNYTYCVVSTSAGLRHNHTCLTICLPRLPSPPGPVPSPSTATHYIMTILGCLFGMVLVLGAVYYCLRRRRRQEEKHKKAASAAAAGSLKKTIIELKYGPELEAPGLAPLSQGPLLGPEAVTRIPYLPAAGEVEQYKLVESADTPKASKGSYMEVRTGDPPERRDCELGRPGPDSQSSVAEISTIAKEVDKVNQIINNCIDALKSESTSFQGVKSGPVSVAEPPLVLLSEPLAAKHGFLAPGYKDAFGHSLQRHHSVEAAGPPRASTSSSGSVRSPRAFRAEAVGVHKAAAAEAKYIEKGSPAADAILTVTPAAAVLRAEAEKGRQYGEHRHSYPGSHPAEPPAPPGPPPPPPHEGLGRKASILEPLTRPRPRDLAYSQLSPQYHSLSYSSSPEYTCRASQSIWERFRLSRRRHKEEEEFMAAGHALRKKVQFAKDEDLHDILDYWKGVSAQHKS.

The first 27 residues, 1–27 (MAGRGWGALWVCVAAATLLHAGGLARA), serve as a signal peptide directing secretion. Over 28–418 (DCWLIEGDKG…VPSPSTATHY (391 aa)) the chain is Extracellular. N-linked (GlcNAc...) asparagine glycosylation occurs at N59. 5 LRR repeats span residues 61 to 82 (TIVD…SLSR), 85 to 106 (NLTY…AFSG), 109 to 130 (NLQV…MLRG), 133 to 154 (KLEY…SFWE), and 157 to 178 (NIVN…TFAG). N-linked (GlcNAc...) asparagine glycosylation is found at N85, N90, and N122. The LRRCT domain occupies 190-252 (NPFYCSCELL…LSKLQSVCTE (63 aa)). N-linked (GlcNAc...) asparagine glycosylation occurs at N210. The segment at 259 to 291 (VVGPPRPASGRSQPGRSPPPPPPPEPSDMPCAD) is disordered. The segment covering 274–285 (RSPPPPPPPEPS) has biased composition (pro residues). Residues 312–399 (QAEARPLIKV…HNHTCLTICL (88 aa)) enclose the Fibronectin type-III domain. The LRR 6 repeat unit spans residues 318–342 (LIKVKQLTQNSATITVQLPSPFHRM). A glycan (N-linked (GlcNAc...) asparagine) is linked at N376. A helical transmembrane segment spans residues 419-439 (IMTILGCLFGMVLVLGAVYYC). Over 440-828 (LRRRRRQEEK…WKGVSAQHKS (389 aa)) the chain is Cytoplasmic. S461 is subject to Phosphoserine. Disordered regions lie at residues 517–552 (TPKA…QSSV), 624–649 (LQRH…VRSP), and 696–732 (KGRQ…GLGR). Residues 529–541 (RTGDPPERRDCEL) show a composition bias toward basic and acidic residues. Positions 632 to 649 (AAGPPRASTSSSGSVRSP) are enriched in low complexity. Position 645 is a phosphoserine (S645). Residues 696-705 (KGRQYGEHRH) are compositionally biased toward basic and acidic residues. The span at 713 to 727 (AEPPAPPGPPPPPPH) shows a compositional bias: pro residues.

In terms of assembly, interacts with PPP1CA.

The protein resides in the membrane. It is found in the cell projection. It localises to the dendrite. Functionally, postsynaptic protein that regulates circuit dynamics in the central nervous system by modulating the temporal dynamics of interneuron recruitment. Specifically present in excitatory synapses onto oriens-lacunosum molecular (OLM) interneurons and acts as a regulator of presynaptic release probability to direct the formation of highly facilitating pyramidal-OLM synapses. Inhibits phosphatase activity of protein phosphatase 1 (PP1) complexes. This chain is Protein ELFN1 (ELFN1), found in Homo sapiens (Human).